We begin with the raw amino-acid sequence, 598 residues long: MFS transporter L2 (598 aa).

3 consecutive transmembrane segments (helical) span residues 83–103 (IAAF…ATSI), 122–142 (FWAG…LGSF), and 150–170 (SLIY…AVAN). Asparagine 171 carries an N-linked (GlcNAc...) asparagine glycan. Transmembrane regions (helical) follow at residues 183–203 (GVGG…TVPL), 212–232 (FFGM…GAFA), 239–259 (WVFW…TVFL), 277–297 (WIGM…ITWG), and 309–329 (LVPL…QEKF). A glycan (N-linked (GlcNAc...) asparagine) is linked at asparagine 342. Transmembrane regions (helical) follow at residues 346 to 366 (ALLY…LYFM), 383 to 403 (VALF…GIAI), 411 to 431 (WANW…ILLK), 439 to 459 (WIFL…AMAL), 476 to 496 (MFSF…GVVF), and 550 to 570 (YIWI…LFID).

Belongs to the major facilitator superfamily.

The protein localises to the membrane. MFS transporter; part of the gene cluster that mediates the biosynthesis of squalestatin S1 (SQS1, also known as zaragozic acid A), a lead compound for the treatment of hyper-cholesterolemia by targeting squalene synthase (SS). The protein is MFS transporter L2 of Phoma sp. (strain ATCC 20986 / MF5453).